Reading from the N-terminus, the 232-residue chain is Platelet-activating factor acetylhydrolase IB subunit alpha1 (232 aa).

Position 2 is an N-acetylserine (Ser-2). A Phosphoserine modification is found at Ser-2. Residues Ser-47, Asp-192, and His-195 contribute to the active site.

The protein belongs to the 'GDSL' lipolytic enzyme family. Platelet-activating factor acetylhydrolase IB beta/gamma subunits subfamily. As to quaternary structure, forms a catalytic dimer which is either homodimer (alpha1/alpha1 homodimer) or heterodimer with PAFAH1B2 (alpha1/alpha2 heterodimer). Component of the cytosolic (PAF-AH (I)) heterotetrameric enzyme, which is composed of PAFAH1B1 (beta), PAFAH1B2 (alpha2) and PAFAH1B3 (alpha1) subunits. The catalytic activity of the enzyme resides in the alpha1 (PAFAH1B3) and alpha2 (PAFAH1B2) subunits, whereas the beta subunit (PAFAH1B1) has regulatory activity. Trimer formation is not essential for the catalytic activity. Interacts with VLDLR; this interaction may modulate the Reelin pathway.

It localises to the cytoplasm. It carries out the reaction a 1-O-alkyl-2-acetyl-sn-glycero-3-phosphocholine + H2O = a 1-O-alkyl-sn-glycero-3-phosphocholine + acetate + H(+). It catalyses the reaction 1-O-hexadecyl-2-acetyl-sn-glycero-3-phosphocholine + H2O = 1-O-hexadecyl-sn-glycero-3-phosphocholine + acetate + H(+). The catalysed reaction is 1-O-hexadecyl-2-acetyl-sn-glycero-3-phosphate + H2O = 1-O-hexadecyl-sn-glycero-3-phosphate + acetate + H(+). With respect to regulation, beta subunit (PAFAH1B1) inhibits the acetylhydrolase activity of the alpha1/alpha1 catalytic homodimer. Functionally, alpha1 catalytic subunit of the cytosolic type I platelet-activating factor (PAF) acetylhydrolase (PAF-AH (I)) heterotetrameric enzyme that catalyzes the hydrolyze of the acetyl group at the sn-2 position of PAF and its analogs and modulates the action of PAF. The activity and substrate specificity of PAF-AH (I) are affected by its subunit composition. Both alpha1/alpha1 homodimer (PAFAH1B3/PAFAH1B3 homodimer) and alpha1/alpha2 heterodimer(PAFAH1B3/PAFAH1B2 heterodimer) hydrolyze 1-O-alkyl-2-acetyl-sn-glycero-3-phosphoric acid (AAGPA) more efficiently than PAF, but they have little hydrolytic activity towards 1-O-alkyl-2-acetyl-sn-glycero-3-phosphorylethanolamine (AAGPE). Plays an important role during the development of brain. The sequence is that of Platelet-activating factor acetylhydrolase IB subunit alpha1 from Bos taurus (Bovine).